Here is a 500-residue protein sequence, read N- to C-terminus: Farnesylcysteine lyase (500 aa).

The signal sequence occupies residues 1-24 (MKDFPIAISLLFALLSPVLLPCSG). N-linked (GlcNAc...) asparagine glycans are attached at residues asparagine 56, asparagine 113, asparagine 211, and asparagine 281.

It belongs to the prenylcysteine oxidase family. Requires FAD as cofactor. Expressed in seedilings, flowers, stems, leaves and roots.

The protein resides in the lysosome. The enzyme catalyses S-(2E,6E)-farnesyl-L-cysteine + O2 + H2O = (2E,6E)-farnesal + L-cysteine + H2O2. Involved in the degradation of prenylcysteine. Cleaves specifically the thioether bond of S-farnesyl-L-cysteine and has no activity with S-geranylgeranyl-L-cysteine. Also recognizes N-acetyl-farnesylcysteine and may have a role in deprenylation of farnesylated proteins. This Arabidopsis thaliana (Mouse-ear cress) protein is Farnesylcysteine lyase.